The sequence spans 390 residues: Spore development regulator vosA (390 aa).

The region spanning 3–132 (NNTSSDFDLI…ADQGVKLRIR (130 aa)) is the Velvet domain. Basic and acidic residues predominate over residues 137–149 (TMLKRSTRPDEFH). Disordered stretches follow at residues 137–191 (TMLK…PVKR) and 265–390 (QASA…GTPQ). Positions 165 to 175 (PPSSSYGGYPP) are enriched in low complexity. The short motif at 273–280 (IPDPTGQS) is the Nuclear localization signal element. 2 stretches are compositionally biased toward polar residues: residues 350 to 364 (QTPQANTPILPSQMV) and 371 to 390 (SSVTGPTTFNHPDSPNGTPQ).

The protein belongs to the velvet family. VosA subfamily. In terms of assembly, forms a heterodimeric complex with velB; the formation of the velB-vosA complex is light-dependent. Interacts with velA, velB and velC.

The protein localises to the nucleus. Its function is as follows. Component of the velB-VosA heterodimeric complex that plays a dual role in activating genes associated with spore maturation and repressing certain development-associated genes. The complex binds DNA through the DNA-binding domain of vosA that recognizes an 11-nucleotide consensus sequence 5'-CTGGCCGCGGC-3' consisting of two motifs in the promoters of key developmental regulatory genes. The chain is Spore development regulator vosA from Penicillium rubens (strain ATCC 28089 / DSM 1075 / NRRL 1951 / Wisconsin 54-1255) (Penicillium chrysogenum).